The sequence spans 469 residues: Glutamate--tRNA ligase (469 aa).

The 'HIGH' region signature appears at 9 to 19; sequence PSPTGFLHVGG. The 'KMSKS' region signature appears at 236–240; sequence KLSKR. Residue lysine 239 coordinates ATP.

It belongs to the class-I aminoacyl-tRNA synthetase family. Glutamate--tRNA ligase type 1 subfamily. As to quaternary structure, monomer.

Its subcellular location is the cytoplasm. The enzyme catalyses tRNA(Glu) + L-glutamate + ATP = L-glutamyl-tRNA(Glu) + AMP + diphosphate. In terms of biological role, catalyzes the attachment of glutamate to tRNA(Glu) in a two-step reaction: glutamate is first activated by ATP to form Glu-AMP and then transferred to the acceptor end of tRNA(Glu). This is Glutamate--tRNA ligase from Shewanella frigidimarina (strain NCIMB 400).